Consider the following 618-residue polypeptide: Proline--tRNA ligase (618 aa).

This sequence belongs to the class-II aminoacyl-tRNA synthetase family. ProS type 1 subfamily. As to quaternary structure, homodimer.

Its subcellular location is the cytoplasm. It catalyses the reaction tRNA(Pro) + L-proline + ATP = L-prolyl-tRNA(Pro) + AMP + diphosphate. Functionally, catalyzes the attachment of proline to tRNA(Pro) in a two-step reaction: proline is first activated by ATP to form Pro-AMP and then transferred to the acceptor end of tRNA(Pro). As ProRS can inadvertently accommodate and process non-cognate amino acids such as alanine and cysteine, to avoid such errors it has two additional distinct editing activities against alanine. One activity is designated as 'pretransfer' editing and involves the tRNA(Pro)-independent hydrolysis of activated Ala-AMP. The other activity is designated 'posttransfer' editing and involves deacylation of mischarged Ala-tRNA(Pro). The misacylated Cys-tRNA(Pro) is not edited by ProRS. In Streptococcus pyogenes serotype M18 (strain MGAS8232), this protein is Proline--tRNA ligase.